Consider the following 448-residue polypeptide: Iroquois-class homeodomain protein irx-3 (448 aa).

The segment at residues 108-170 is a DNA-binding region (homeobox; TALE-type); sequence DPSRPKNATR…NARRRLKKEN (63 aa). Residues 171–247 form a disordered region; it reads KMTWAPRSRT…EVSDGFEDLN (77 aa). Over residues 195 to 222 the composition is skewed to acidic residues; the sequence is KHEDEEEIDLENIDTEDIESKEDLDDPD. A compositionally biased stretch (basic and acidic residues) spans 223–237; it reads TDIHSDSKTDTRSDS. The span at 238–247 shows a compositional bias: acidic residues; sequence EVSDGFEDLN.

Belongs to the TALE/IRO homeobox family. Primarily expressed in the developing central nervous system (CNS). At gastrula stage, expressed in both the superficial and deep layers of the presumptive neural plate with expression spreading to the prospective hindbrain, spinal cord and midbrain-hindbrain junction as neurulation proceeds. Not expressed in the anterior neural plate and CNS expression in the tadpole excludes the forebrain. Outside of the CNS, expressed around the closing blastopore at early gastrula stages and as gastrulation proceeds, expression switches to the anterior lateral plate mesoderm. In tadpoles, expressed in the ectodermal layer of the branchial arches, and in the otic vesicle. Also expressed in specific and overlapping dynamic patterns with irx1 and irx2 during pronephric kidney development. Renal expression begins before segment-specific terminal differentiation in the pronephric anlage at mid-neurula stage, and is later found in proximal tubule PT3 as well as intermediate tubule segments IT1 and IT2, with expression in the kidney being maintained through to the tadpole stage.

The protein localises to the nucleus. Functionally, acts partially redundantly with other irx members in neural patterning. Required for formation of the posterior forebrain, midbrain, hindbrain, and to a lesser extent, spinal cord. Both up-regulates and down-regulates gene expression during neural development. Acts early in neural plate development to induce proneural gene expression and specify a neural precursor state. Also up-regulates repressors that prevent neuronal differentiation. Required during at least two stages of pronephros kidney development; during neurula stages, maintains transcription of key renal genes to define the size and identity of the pronephric anlage, probably in part through regulation of bmp-signaling. Subsequently required for proper formation of the intermediate tubule segment of the pronephros. The protein is Iroquois-class homeodomain protein irx-3 (irx3) of Xenopus laevis (African clawed frog).